We begin with the raw amino-acid sequence, 873 residues long: Leucine--tRNA ligase (873 aa).

The short motif at 47-57 (PYPSGKLHMGH) is the 'HIGH' region element. A 'KMSKS' region motif is present at residues 636–640 (KMSKS). Lys-639 serves as a coordination point for ATP.

It belongs to the class-I aminoacyl-tRNA synthetase family.

The protein resides in the cytoplasm. The enzyme catalyses tRNA(Leu) + L-leucine + ATP = L-leucyl-tRNA(Leu) + AMP + diphosphate. The chain is Leucine--tRNA ligase from Acinetobacter baylyi (strain ATCC 33305 / BD413 / ADP1).